Reading from the N-terminus, the 1156-residue chain is Protein hu-li tai shao (1156 aa).

Residues 1-36 (MTEVEQPPQNGIDPTAGEDDDNSKARPADIEQDMRE) form a disordered region. Over residues 22 to 36 (NSKARPADIEQDMRE) the composition is skewed to basic and acidic residues. Residue serine 478 is modified to Phosphoserine. Residues threonine 480 and threonine 498 each carry the phosphothreonine modification. Serine 603 is subject to Phosphoserine. At tyrosine 608 the chain carries Phosphotyrosine. A phosphothreonine mark is found at threonine 609 and threonine 611. A Phosphoserine modification is found at serine 614. A Phosphotyrosine modification is found at tyrosine 627. Phosphoserine is present on serine 630. The segment at 897–956 (FLPSNHALPKDTDANNRDQTDRERPEAEQEESFHCAGDSGIGDSTGRRPRLATTSNDSSI) is disordered. A compositionally biased stretch (basic and acidic residues) spans 904–929 (LPKDTDANNRDQTDRERPEAEQEESF).

Belongs to the aldolase class II family. Adducin subfamily. As to expression, isoform C is expressed in nurse cells. Isoform A is produced in the nurse cell but transported into the oocyte at stage 1, localizes to the oocyte cortex at stage 8 and to the anterior pole from day 9 onwards. Isoform B is expressed in the somatic follicle cells that surround the germline.

Its subcellular location is the cytoplasm. The protein localises to the cytoskeleton. It is found in the cell membrane. Functionally, required for assembling actin at ring canals in developing egg chambers. Probably interacts with other developmental proteins involved in nurse cell/oocyte transport through the ring canals. Important for normal neuromotor function. This chain is Protein hu-li tai shao (hts), found in Drosophila melanogaster (Fruit fly).